Reading from the N-terminus, the 130-residue chain is Protein ApaG (130 aa).

An ApaG domain is found at 3–127 (RAVTRQIEVT…FSLDSPDNKR (125 aa)).

This chain is Protein ApaG, found in Bradyrhizobium diazoefficiens (strain JCM 10833 / BCRC 13528 / IAM 13628 / NBRC 14792 / USDA 110).